Here is a 480-residue protein sequence, read N- to C-terminus: MVSTSKIKSVDFYRKIPRDLTEASLSGAGLSIIAALSMIFLFGMELNNYLAVSTSTSVIVDRSADGDFLRLDFNISFPSLSCEFASVDVSDVLGTNRLNVTKTIRKFSIDSNMRPTGSEFHAGEVLSLINHGDETGEEIVEDSVPLTGRNFDTFTHQFPILVVNFYAPWCYWCNLLKPSWEKAAKQIKERYDPEMDGRVILAKVDCTQEGDLCRRNHIQGYPSIRIFRKGSDLKDDNAHHDHESYYGDRDTESLVKMVVSLVEPIHLEPHNLALEDKSDNSSRTLKKAPSTGGCRVEGYMRVKKVPGNLMVSARSGSHSFDSSQMNMSHVVNHLSFGRRIMPQKFSEFKRLSPYLGLSHDRLDGRSFINQRDLGPNVTIEHYLQIVKTEVVKSNGQALVEAYEYTAHSSVAHSYYLPVAKFHFELSPMQVLITENSKSFSHFITNVCAIIGGVFTVAGILDSILHHSMTLMKKIELGKNF.

2 N-linked (GlcNAc...) asparagine glycosylation sites follow: N74 and N99. The Thioredoxin domain occupies 120–263; sequence FHAGEVLSLI…LVKMVVSLVE (144 aa). Catalysis depends on nucleophile residues C170 and C173. A disulfide bond links C170 and C173. N-linked (GlcNAc...) asparagine glycosylation is found at N280, N326, and N376. The chain crosses the membrane as a helical span at residues 439 to 459; it reads FSHFITNVCAIIGGVFTVAGI.

This sequence belongs to the protein disulfide isomerase family. Widely expressed.

The protein resides in the membrane. Acts as a protein-folding catalyst that interacts with nascent polypeptides to catalyze the formation, isomerization, and reduction or oxidation of disulfide bonds. This Arabidopsis thaliana (Mouse-ear cress) protein is Protein disulfide-isomerase 5-4 (PDIL5-4).